We begin with the raw amino-acid sequence, 154 residues long: 6,7-dimethyl-8-ribityllumazine synthase (154 aa).

Residues phenylalanine 26, 60-62 (ALE), and 84-86 (CII) each bind 5-amino-6-(D-ribitylamino)uracil. 89–90 (ET) contributes to the (2S)-2-hydroxy-3-oxobutyl phosphate binding site. The active-site Proton donor is histidine 92. Asparagine 117 is a 5-amino-6-(D-ribitylamino)uracil binding site. Arginine 131 lines the (2S)-2-hydroxy-3-oxobutyl phosphate pocket.

Belongs to the DMRL synthase family.

The catalysed reaction is (2S)-2-hydroxy-3-oxobutyl phosphate + 5-amino-6-(D-ribitylamino)uracil = 6,7-dimethyl-8-(1-D-ribityl)lumazine + phosphate + 2 H2O + H(+). It functions in the pathway cofactor biosynthesis; riboflavin biosynthesis; riboflavin from 2-hydroxy-3-oxobutyl phosphate and 5-amino-6-(D-ribitylamino)uracil: step 1/2. Catalyzes the formation of 6,7-dimethyl-8-ribityllumazine by condensation of 5-amino-6-(D-ribitylamino)uracil with 3,4-dihydroxy-2-butanone 4-phosphate. This is the penultimate step in the biosynthesis of riboflavin. In Leptothrix cholodnii (strain ATCC 51168 / LMG 8142 / SP-6) (Leptothrix discophora (strain SP-6)), this protein is 6,7-dimethyl-8-ribityllumazine synthase.